The sequence spans 337 residues: ATP-dependent (S)-NAD(P)H-hydrate dehydratase (337 aa).

S6 carries the post-translational modification Phosphoserine. One can recognise a YjeF C-terminal domain in the interval 11-335 (IKLAQKRCIP…DRVGEVFAKL (325 aa)). (6S)-NADPHX-binding positions include G121 and 182–188 (NVVEFKR). ATP contacts are provided by residues 218–222 (KGQSD) and 240–249 (GSNKRVGGQG). The disordered stretch occupies residues 224–246 (IFSPDSEKDMLTNSEEGSNKRVG). D250 contributes to the (6S)-NADPHX binding site.

It belongs to the NnrD/CARKD family. It depends on Mg(2+) as a cofactor.

The protein localises to the cytoplasm. It carries out the reaction (6S)-NADHX + ATP = ADP + phosphate + NADH + H(+). The catalysed reaction is (6S)-NADPHX + ATP = ADP + phosphate + NADPH + H(+). Catalyzes the dehydration of the S-form of NAD(P)HX at the expense of ATP, which is converted to ADP. Together with NAD(P)HX epimerase, which catalyzes the epimerization of the S- and R-forms, the enzyme allows the repair of both epimers of NAD(P)HX, a damaged form of NAD(P)H that is a result of enzymatic or heat-dependent hydration. This chain is ATP-dependent (S)-NAD(P)H-hydrate dehydratase, found in Saccharomyces cerevisiae (strain ATCC 204508 / S288c) (Baker's yeast).